The primary structure comprises 139 residues: Intrinsically disordered protein, expressed in pharynx 15 (139 aa).

Polar residues predominate over residues 1 to 12 (MNNNQGMYNTQT). The disordered stretch occupies residues 1 to 98 (MNNNQGMYNT…GSSTPSPQYS (98 aa)). Composition is skewed to low complexity over residues 13-41 (TQGY…QTTT) and 49-98 (QPQQ…PQYS).

In Caenorhabditis elegans, this protein is Intrinsically disordered protein, expressed in pharynx 15.